The primary structure comprises 828 residues: Leucine--tRNA ligase (828 aa).

The 'HIGH' region signature appears at 36–46; sequence PYPSGKIHIGH. The 'KMSKS' region signature appears at 595-599; that stretch reads KMSKS. Lys598 serves as a coordination point for ATP.

The protein belongs to the class-I aminoacyl-tRNA synthetase family.

The protein localises to the cytoplasm. It catalyses the reaction tRNA(Leu) + L-leucine + ATP = L-leucyl-tRNA(Leu) + AMP + diphosphate. The polypeptide is Leucine--tRNA ligase (Rickettsia typhi (strain ATCC VR-144 / Wilmington)).